Consider the following 452-residue polypeptide: Flavin-containing monooxygenase FMO GS-OX-like 4 (452 aa).

17-22 (GAGAAG) contributes to the FAD binding site. Position 217-222 (217-222 (GNSASA)) interacts with NADP(+).

This sequence belongs to the FMO family. It depends on FAD as a cofactor.

Catalyzes the conversion of methylthioalkyl glucosinolates of any chain length into methylsulfinylalkyl glucosinolates. This Arabidopsis thaliana (Mouse-ear cress) protein is Flavin-containing monooxygenase FMO GS-OX-like 4.